We begin with the raw amino-acid sequence, 86 residues long: Large ribosomal subunit protein bL27 (86 aa).

Residues Met-1 to Leu-21 are disordered.

The protein belongs to the bacterial ribosomal protein bL27 family.

This is Large ribosomal subunit protein bL27 from Hahella chejuensis (strain KCTC 2396).